A 195-amino-acid chain; its full sequence is Dynactin subunit 6 (195 aa).

It belongs to the dynactin subunits 5/6 family. Dynactin subunit 6 subfamily. Member of the pointed-end complex of the dynactin shoulder complex which contains dctn4, dctn5 and dctn6 subunits and Actr10. Within the complex dctn6 forms a heterodimer with dctn5. Interacts with plk1.

Its subcellular location is the cytoplasm. It localises to the cytoskeleton. The protein localises to the chromosome. It is found in the centromere. The protein resides in the kinetochore. Functionally, part of the dynactin complex that activates the molecular motor dynein for ultra-processive transport along microtubules. The protein is Dynactin subunit 6 (dctn6) of Danio rerio (Zebrafish).